The sequence spans 331 residues: Ketol-acid reductoisomerase (NADP(+)) (331 aa).

Positions 2–182 (AQLFYDSDAD…GGTRAGILET (181 aa)) constitute a KARI N-terminal Rossmann domain. NADP(+) contacts are provided by residues 25 to 28 (YGSQ), S51, S53, and 83 to 86 (DEFQ). H108 is an active-site residue. G134 serves as a coordination point for NADP(+). In terms of domain architecture, KARI C-terminal knotted spans 183–328 (NFKEETETDL…KGLRSMFSWL (146 aa)). Mg(2+) is bound by residues D191, E195, E227, and E231. Residue S252 participates in substrate binding.

The protein belongs to the ketol-acid reductoisomerase family. Mg(2+) is required as a cofactor.

The catalysed reaction is (2R)-2,3-dihydroxy-3-methylbutanoate + NADP(+) = (2S)-2-acetolactate + NADPH + H(+). The enzyme catalyses (2R,3R)-2,3-dihydroxy-3-methylpentanoate + NADP(+) = (S)-2-ethyl-2-hydroxy-3-oxobutanoate + NADPH + H(+). It functions in the pathway amino-acid biosynthesis; L-isoleucine biosynthesis; L-isoleucine from 2-oxobutanoate: step 2/4. Its pathway is amino-acid biosynthesis; L-valine biosynthesis; L-valine from pyruvate: step 2/4. Involved in the biosynthesis of branched-chain amino acids (BCAA). Catalyzes an alkyl-migration followed by a ketol-acid reduction of (S)-2-acetolactate (S2AL) to yield (R)-2,3-dihydroxy-isovalerate. In the isomerase reaction, S2AL is rearranged via a Mg-dependent methyl migration to produce 3-hydroxy-3-methyl-2-ketobutyrate (HMKB). In the reductase reaction, this 2-ketoacid undergoes a metal-dependent reduction by NADPH to yield (R)-2,3-dihydroxy-isovalerate. This Parasynechococcus marenigrum (strain WH8102) protein is Ketol-acid reductoisomerase (NADP(+)).